A 219-amino-acid polypeptide reads, in one-letter code: Rho-related protein racN (219 aa).

Position 12 to 19 (12 to 19) interacts with GTP; sequence GDVTIGKT. The Effector region signature appears at 33–41; the sequence is YIPTIFDNH. Residues 58–62 and 114–117 each bind GTP; these read DTGGG and TKTD. Cys-216 is modified (cysteine methyl ester). Residue Cys-216 is the site of S-geranylgeranyl cysteine attachment. A propeptide spans 217 to 219 (removed in mature form); it reads IIC.

Belongs to the small GTPase superfamily. Rho family.

It localises to the cell membrane. This chain is Rho-related protein racN (racN), found in Dictyostelium discoideum (Social amoeba).